A 167-amino-acid chain; its full sequence is Thioredoxin M-type, chloroplastic (167 aa).

The transit peptide at 1 to 53 directs the protein to the chloroplast; that stretch reads MAMETCFRAWALHAPAGSKDRLLVGNLVLPSKRALAPLSVGRVATRRPRHVCQ. One can recognise a Thioredoxin domain in the interval 54 to 165; sequence SKNAVDEVVV…LTTLIDKYIG (112 aa). Residues Cys89 and Cys92 are joined by a disulfide bond.

This sequence belongs to the thioredoxin family. Plant M-type subfamily. As to quaternary structure, forms a complex with heterodimeric ferredoxin-thioredoxin reductase (FTR) and ferredoxin.

It localises to the plastid. The protein resides in the chloroplast. Functionally, participates in various redox reactions through the reversible oxidation of the active center dithiol to a disulfide. The M form is known to activate NADP-malate dehydrogenase. This chain is Thioredoxin M-type, chloroplastic (TRM1), found in Zea mays (Maize).